The chain runs to 598 residues: Nuclear receptor subfamily 4 group A member 2 (598 aa).

A disordered region spans residues 1-22; the sequence is MPCVQAQYGSSPQGASPASQGY. A compositionally biased stretch (polar residues) spans 7–18; that stretch reads QYGSSPQGASPA. A DNA-binding region (nuclear receptor) is located at residues 260 to 335; that stretch reads EGLCAVCGDN…VGMVKEVVRT (76 aa). 2 consecutive NR C4-type zinc fingers follow at residues 263–283 and 299–318; these read CAVCGDNAACQHYGVRTCEGC and CLANKNCPVDKRRRNRCQYC. The Bipartite nuclear localization signal (NLS1) signature appears at 287 to 314; it reads FKRTVQKNAKYVCLANKNCPVDKRRRNR. Residues 337-361 are disordered; sequence SLKGRRGRLPSKPKSPQEPSPPSPP. Residues 338-350 carry the Nuclear localization signal (NLS1) motif; the sequence is LKGRRGRLPSKPK. Residues 352 to 361 show a composition bias toward pro residues; it reads PQEPSPPSPP. The NR LBD domain maps to 360–595; it reads PPVSLISALV…AIIDKLFLDT (236 aa). The nuclear export sequence (NES1) signature appears at 443–452; it reads FLELFVLRLA. The nuclear export sequence (NES2) motif lies at 568–577; that stretch reads QGLQRIFYLK.

It belongs to the nuclear hormone receptor family. In terms of assembly, interacts with SFPQ, NCOR2, SIN3A and HADC1. The interaction with NCOR2 increases in the absence of PITX3. Interacts with PER2.

The protein localises to the cytoplasm. The protein resides in the nucleus. In terms of biological role, transcriptional regulator which is important for the differentiation and maintenance of meso-diencephalic dopaminergic (mdDA) neurons during development. It is crucial for expression of a set of genes such as SLC6A3, SLC18A2, TH and DRD2 which are essential for development of mdDA neurons. This is Nuclear receptor subfamily 4 group A member 2 (NR4A2) from Pongo abelii (Sumatran orangutan).